A 211-amino-acid chain; its full sequence is Probable transcription repressor protein RGM1 (211 aa).

The Nuclear localization signal motif lies at 6–11 (PKRNKD). 2 C2H2-type zinc fingers span residues 19–44 (YRCV…IRKH) and 50–73 (FQCN…SSVH). The tract at residues 178–211 (NIVELPPDSSDTPASPSKVQSFDQAKDASPNAKK) is disordered. The segment covering 183-194 (PPDSSDTPASPS) has biased composition (low complexity).

It localises to the nucleus. This chain is Probable transcription repressor protein RGM1 (RGM1), found in Saccharomyces cerevisiae (strain ATCC 204508 / S288c) (Baker's yeast).